The following is a 145-amino-acid chain: Basic phospholipase A2 PC14 (145 aa).

A signal peptide spans 1-21 (MYPAHLLLLLAVCVSLLGASA). The propeptide occupies 22 to 27 (IPPLPL). 7 cysteine pairs are disulfide-bonded: C38/C98, C54/C144, C56/C72, C71/C125, C78/C118, C87/C111, and C105/C116. Ca(2+) contacts are provided by Y55, G57, and G59. H75 is a catalytic residue. D76 contributes to the Ca(2+) binding site. D119 is a catalytic residue.

Belongs to the phospholipase A2 family. Group I subfamily. D49 sub-subfamily. Requires Ca(2+) as cofactor.

Its subcellular location is the secreted. It catalyses the reaction a 1,2-diacyl-sn-glycero-3-phosphocholine + H2O = a 1-acyl-sn-glycero-3-phosphocholine + a fatty acid + H(+). PLA2 catalyzes the calcium-dependent hydrolysis of the 2-acyl groups in 3-sn-phosphoglycerides. This chain is Basic phospholipase A2 PC14, found in Laticauda laticaudata (Blue-ringed sea krait).